A 70-amino-acid chain; its full sequence is DNA-directed RNA polymerase subunit omega (70 aa).

It belongs to the RNA polymerase subunit omega family. The RNAP catalytic core consists of 2 alpha, 1 beta, 1 beta' and 1 omega subunit. When a sigma factor is associated with the core the holoenzyme is formed, which can initiate transcription.

The catalysed reaction is RNA(n) + a ribonucleoside 5'-triphosphate = RNA(n+1) + diphosphate. In terms of biological role, promotes RNA polymerase assembly. Latches the N- and C-terminal regions of the beta' subunit thereby facilitating its interaction with the beta and alpha subunits. This chain is DNA-directed RNA polymerase subunit omega, found in Staphylococcus epidermidis (strain ATCC 12228 / FDA PCI 1200).